Consider the following 398-residue polypeptide: Glutamyl-tRNA reductase (398 aa).

Residues 45-48 (TCNR), Ser88, 93-95 (EDQ), and Gln99 contribute to the substrate site. The active-site Nucleophile is the Cys46. NADP(+) is bound at residue 168–173 (GAGKMG).

It belongs to the glutamyl-tRNA reductase family. In terms of assembly, homodimer.

The catalysed reaction is (S)-4-amino-5-oxopentanoate + tRNA(Glu) + NADP(+) = L-glutamyl-tRNA(Glu) + NADPH + H(+). The protein operates within porphyrin-containing compound metabolism; protoporphyrin-IX biosynthesis; 5-aminolevulinate from L-glutamyl-tRNA(Glu): step 1/2. Catalyzes the NADPH-dependent reduction of glutamyl-tRNA(Glu) to glutamate 1-semialdehyde (GSA). In Methanothermobacter marburgensis (strain ATCC BAA-927 / DSM 2133 / JCM 14651 / NBRC 100331 / OCM 82 / Marburg) (Methanobacterium thermoautotrophicum), this protein is Glutamyl-tRNA reductase (hemA).